A 582-amino-acid polypeptide reads, in one-letter code: Aspartate--tRNA ligase (582 aa).

Residue E174 coordinates L-aspartate. Residues 198–201 (QITK) are aspartate. L-aspartate is bound at residue R220. ATP is bound by residues 220–222 (RDE) and Q229. Position 443 (H443) interacts with L-aspartate. An ATP-binding site is contributed by E477. R484 serves as a coordination point for L-aspartate. ATP is bound at residue 529 to 532 (GLDR).

Belongs to the class-II aminoacyl-tRNA synthetase family. Type 1 subfamily. As to quaternary structure, homodimer.

The protein localises to the cytoplasm. It carries out the reaction tRNA(Asp) + L-aspartate + ATP = L-aspartyl-tRNA(Asp) + AMP + diphosphate. Its function is as follows. Catalyzes the attachment of L-aspartate to tRNA(Asp) in a two-step reaction: L-aspartate is first activated by ATP to form Asp-AMP and then transferred to the acceptor end of tRNA(Asp). This is Aspartate--tRNA ligase from Streptococcus pyogenes serotype M1.